The primary structure comprises 932 residues: Protocadherin gamma-A12 (932 aa).

Positions Met1 to Thr29 are cleaved as a signal peptide. Cadherin domains are found at residues Gln30 to Phe133, Arg134 to Phe242, Ala243 to Val347, Val348 to Phe452, Pro453 to Ile562, and Asp570 to Asn683. Over Gln30–Tyr692 the chain is Extracellular. Residues Asn265, Asn419, and Asn545 are each glycosylated (N-linked (GlcNAc...) asparagine). The chain crosses the membrane as a helical span at residues Leu693 to Ala713. The Cytoplasmic segment spans residues Leu714–Lys932. 2 disordered regions span residues Gly803 to Asn841 and Ala902 to Lys932. Residues Trp816–Asn841 show a composition bias toward polar residues. A compositionally biased stretch (basic residues) spans Asn922–Lys932.

Its subcellular location is the cell membrane. In terms of biological role, potential calcium-dependent cell-adhesion protein. May be involved in the establishment and maintenance of specific neuronal connections in the brain. In Pan troglodytes (Chimpanzee), this protein is Protocadherin gamma-A12 (PCDHGA12).